The primary structure comprises 353 residues: tRNA-specific 2-thiouridylase MnmA 2 (353 aa).

Position 6–13 (6–13 (LLSGGVDS)) interacts with ATP. Residues 92 to 94 (NPD) form an interaction with target base in tRNA region. C97 functions as the Nucleophile in the catalytic mechanism. A disulfide bridge links C97 with C192. Residue G120 coordinates ATP. Residues 142–144 (KDQ) form an interaction with tRNA region. C192 acts as the Cysteine persulfide intermediate in catalysis.

This sequence belongs to the MnmA/TRMU family.

The protein resides in the cytoplasm. It carries out the reaction S-sulfanyl-L-cysteinyl-[protein] + uridine(34) in tRNA + AH2 + ATP = 2-thiouridine(34) in tRNA + L-cysteinyl-[protein] + A + AMP + diphosphate + H(+). Functionally, catalyzes the 2-thiolation of uridine at the wobble position (U34) of tRNA, leading to the formation of s(2)U34. In Bacteroides fragilis (strain ATCC 25285 / DSM 2151 / CCUG 4856 / JCM 11019 / LMG 10263 / NCTC 9343 / Onslow / VPI 2553 / EN-2), this protein is tRNA-specific 2-thiouridylase MnmA 2.